Reading from the N-terminus, the 153-residue chain is MGRQRRCRWAQPWTLLLLLLGPRLLVTHGWRRKGDKNSENTNILELYLPAVVEYALHVYNMRSQDMNAYKVVRVLRSWLELSEQKEEKGLVFSMELQFARTRCGKFDEDIDNCPFQATPDVNNTITCFFTVDTEPWKTEFQLLNDTCLEGSAE.

The first 27 residues, 1–27, serve as a signal peptide directing secretion; the sequence is MGRQRRCRWAQPWTLLLLLLGPRLLVT.

This sequence belongs to the cystatin family.

It is found in the secreted. Its function is as follows. May play a role in hematopoietic differentiation or inflammation. This Bos taurus (Bovine) protein is Cystatin-9 (CST9).